We begin with the raw amino-acid sequence, 325 residues long: Elongation factor P--(R)-beta-lysine ligase (325 aa).

76–78 serves as a coordination point for substrate; sequence SPE. Residues 100-102 and asparagine 109 each bind ATP; that span reads RNE. Residue tyrosine 118 coordinates substrate. Residue 244–245 participates in ATP binding; sequence EL. Glutamate 251 serves as a coordination point for substrate. Glycine 300 provides a ligand contact to ATP.

It belongs to the class-II aminoacyl-tRNA synthetase family. EpmA subfamily. In terms of assembly, homodimer.

It carries out the reaction D-beta-lysine + L-lysyl-[protein] + ATP = N(6)-((3R)-3,6-diaminohexanoyl)-L-lysyl-[protein] + AMP + diphosphate + H(+). Functionally, with EpmB is involved in the beta-lysylation step of the post-translational modification of translation elongation factor P (EF-P). Catalyzes the ATP-dependent activation of (R)-beta-lysine produced by EpmB, forming a lysyl-adenylate, from which the beta-lysyl moiety is then transferred to the epsilon-amino group of a conserved specific lysine residue in EF-P. This is Elongation factor P--(R)-beta-lysine ligase from Citrobacter koseri (strain ATCC BAA-895 / CDC 4225-83 / SGSC4696).